We begin with the raw amino-acid sequence, 34 residues long: Omega-ctenitoxin-Pn2a (34 aa).

3 disulfide bridges follow: Cys-2/Cys-16, Cys-9/Cys-26, and Cys-15/Cys-28.

It belongs to the neurotoxin 02 (plectoxin) family. 01 (Tx3) subfamily. As to expression, expressed by the venom gland.

The protein resides in the secreted. Inhibits all known high-voltage activated calcium channels (L-, P/Q- and R-type currents) (Cav), and most effectively the P/Q- (Cav2.1/CACNA1A) and R-type (Cav2.3/CACNA1E) currents. In rat brain, inhibits glutamate release, neuronal death and loss of neurotransmission in the hippocampus resulting from ischemia. In vivo, induces rapid general flaccid paralysis followed by death in 10-30 minutes at dose levels of 5 ug per mouse. The protein is Omega-ctenitoxin-Pn2a of Phoneutria nigriventer (Brazilian armed spider).